Reading from the N-terminus, the 229-residue chain is Demethylmenaquinone methyltransferase (229 aa).

S-adenosyl-L-methionine contacts are provided by residues threonine 58, aspartate 78, and 100 to 101 (DA).

Belongs to the class I-like SAM-binding methyltransferase superfamily. MenG/UbiE family.

The catalysed reaction is a 2-demethylmenaquinol + S-adenosyl-L-methionine = a menaquinol + S-adenosyl-L-homocysteine + H(+). Its pathway is quinol/quinone metabolism; menaquinone biosynthesis; menaquinol from 1,4-dihydroxy-2-naphthoate: step 2/2. Functionally, methyltransferase required for the conversion of demethylmenaquinol (DMKH2) to menaquinol (MKH2). The chain is Demethylmenaquinone methyltransferase from Thermotoga maritima (strain ATCC 43589 / DSM 3109 / JCM 10099 / NBRC 100826 / MSB8).